The following is a 115-amino-acid chain: Large ribosomal subunit protein P2 (115 aa).

Methionine 1 bears the N-acetylmethionine mark. Serine 17 and serine 19 each carry phosphoserine. Residue lysine 21 is modified to N6-acetyllysine; alternate. Lysine 21 is modified (N6-succinyllysine; alternate). Over residues 69–90 (GAXAVAAAPGSXAPAAGSAPAA) the composition is skewed to low complexity. The interval 69–115 (GAXAVAAAPGSXAPAAGSAPAAAEEKKEEKKEESEESDDDMGFGLFD) is disordered. Phosphoserine is present on residues serine 79 and serine 86. Over residues 91–101 (AEEKKEEKKEE) the composition is skewed to basic and acidic residues. 2 positions are modified to phosphoserine: serine 102 and serine 105.

It belongs to the eukaryotic ribosomal protein P1/P2 family. As to quaternary structure, heterodimer with RPLP1 at the lateral ribosomal stalk of the large ribosomal subunit.

Functionally, plays an important role in the elongation step of protein synthesis. The polypeptide is Large ribosomal subunit protein P2 (RPLP2) (Sus scrofa (Pig)).